We begin with the raw amino-acid sequence, 91 residues long: Small ribosomal subunit protein uS19 (91 aa).

Belongs to the universal ribosomal protein uS19 family.

Functionally, protein S19 forms a complex with S13 that binds strongly to the 16S ribosomal RNA. This is Small ribosomal subunit protein uS19 from Opitutus terrae (strain DSM 11246 / JCM 15787 / PB90-1).